We begin with the raw amino-acid sequence, 146 residues long: Putative ankyrin repeat protein FPV224 (146 aa).

4 ANK repeats span residues serine 9–isoleucine 38, lysine 42–isoleucine 79, tyrosine 94–glutamate 126, and tyrosine 127–asparagine 145.

The polypeptide is Putative ankyrin repeat protein FPV224 (Fowlpox virus (strain NVSL) (FPV)).